The primary structure comprises 149 residues: Calmodulin-1 (149 aa).

At Ala2 the chain carries N-acetylalanine. EF-hand domains follow at residues 8-43 (DQIAEFKEAFSLFDKDGDGCITTKELGTVMRSLGQN), 44-79 (PTEAELQDMINEVDADGNGTIDFPEFLNLMARKMKD), 81-116 (DSEEELKEAFRVFDKDQNGFISAAELRHVMTNLGEK), and 117-149 (LTDEEVDEMIREADVDGDGQINYEEFVKVMMAK). The Ca(2+) site is built by Asp21, Asp23, Asp25, Cys27, Glu32, Asp57, Asp59, Asn61, Thr63, Glu68, Asp94, Asp96, Asn98, and Glu105. An N6,N6,N6-trimethyllysine modification is found at Lys116. The Ca(2+) site is built by Asp130, Asp132, Asp134, Gln136, and Glu141.

It belongs to the calmodulin family.

Its function is as follows. Calmodulin mediates the control of a large number of enzymes, ion channels and other proteins by Ca(2+). Among the enzymes to be stimulated by the calmodulin-Ca(2+) complex are a number of protein kinases and phosphatases. This is Calmodulin-1 (CAM1-1) from Oryza sativa subsp. indica (Rice).